The chain runs to 500 residues: Tektin-like protein 1 (500 aa).

The interval 1–25 (MPVLLPSTDRDQDSRVGAPEWHQAA) is disordered. Position 14 is a phosphoserine (Ser14). Residues 198-229 (MLVWEREELKSMKRKMEKDMERSEALLKALAS) adopt a coiled-coil conformation. Residues 265–286 (VDITRPPTPRTQGLKTPPPDPV) form a disordered region. The residue at position 372 (Tyr372) is a Phosphotyrosine. A coiled-coil region spans residues 422–448 (LTRHNLQMEKNLKELRTTHDNLAWSLN).

In terms of assembly, microtubule inner protein component of sperm flagellar doublet microtubules.

The protein localises to the cytoplasm. It is found in the cytoskeleton. It localises to the flagellum axoneme. Microtubule inner protein (MIP) part of the dynein-decorated doublet microtubules (DMTs) in sperm flagellar axoneme, which is required for motile flagellum beating. Forms an extensive interaction network cross-linking the lumen of axonemal doublet microtubules. This is Tektin-like protein 1 from Rattus norvegicus (Rat).